A 201-amino-acid polypeptide reads, in one-letter code: ATP-dependent Clp protease proteolytic subunit (201 aa).

Ser97 serves as the catalytic Nucleophile. His122 is a catalytic residue.

The protein belongs to the peptidase S14 family. In terms of assembly, fourteen ClpP subunits assemble into 2 heptameric rings which stack back to back to give a disk-like structure with a central cavity, resembling the structure of eukaryotic proteasomes.

It localises to the cytoplasm. It catalyses the reaction Hydrolysis of proteins to small peptides in the presence of ATP and magnesium. alpha-casein is the usual test substrate. In the absence of ATP, only oligopeptides shorter than five residues are hydrolyzed (such as succinyl-Leu-Tyr-|-NHMec, and Leu-Tyr-Leu-|-Tyr-Trp, in which cleavage of the -Tyr-|-Leu- and -Tyr-|-Trp bonds also occurs).. Its function is as follows. Cleaves peptides in various proteins in a process that requires ATP hydrolysis. Has a chymotrypsin-like activity. Plays a major role in the degradation of misfolded proteins. This Nitratidesulfovibrio vulgaris (strain DSM 19637 / Miyazaki F) (Desulfovibrio vulgaris) protein is ATP-dependent Clp protease proteolytic subunit.